Reading from the N-terminus, the 206-residue chain is Large ribosomal subunit protein uL4 (206 aa).

The segment at 48-78 (THSVKTRGHVSGGGAKPWRQKGTGRARAGSN) is disordered.

Belongs to the universal ribosomal protein uL4 family. As to quaternary structure, part of the 50S ribosomal subunit.

In terms of biological role, one of the primary rRNA binding proteins, this protein initially binds near the 5'-end of the 23S rRNA. It is important during the early stages of 50S assembly. It makes multiple contacts with different domains of the 23S rRNA in the assembled 50S subunit and ribosome. Forms part of the polypeptide exit tunnel. The polypeptide is Large ribosomal subunit protein uL4 (Lawsonia intracellularis (strain PHE/MN1-00)).